The chain runs to 145 residues: Ecdysteroid-regulated 16 kDa protein (145 aa).

Positions 1–16 (MLFYITVTVLLVSAQA) are cleaved as a signal peptide. Intrachain disulfides connect cysteine 22–cysteine 137 and cysteine 90–cysteine 97. Asparagine 51 is a glycosylation site (N-linked (GlcNAc...) asparagine).

Belongs to the NPC2 family.

Its subcellular location is the secreted. The polypeptide is Ecdysteroid-regulated 16 kDa protein (ESR16) (Manduca sexta (Tobacco hawkmoth)).